The primary structure comprises 393 residues: E3 ubiquitin-protein transferase RMND5B (393 aa).

Methionine 1 bears the N-acetylmethionine mark. One can recognise a LisH domain in the interval 116–148; sequence QQQILQMAIVEHLYQQGMLSVAEELCQESTLNV. In terms of domain architecture, CTLH spans 155–212; sequence PFLELNRILEALHEQDLGPALEWAVSHRQRLLELNSSLEFKLHRLHFIRLLAGGPAKQ. The RING-Gid-type zinc-finger motif lies at 338–379; the sequence is CPILRQQTSDSNPPIKLICGHVISRDALNKLINGGKLKCPYC.

Identified in the CTLH complex that contains GID4, RANBP9 and/or RANBP10, MKLN1, MAEA, RMND5A (or alternatively its paralog RMND5B), GID8, ARMC8, WDR26 and YPEL5. Within this complex, MAEA, RMND5A (or alternatively its paralog RMND5B), GID8, WDR26, and RANBP9 and/or RANBP10 form the catalytic core, while GID4, MKLN1, ARMC8 and YPEL5 have ancillary roles.

It is found in the cytoplasm. It localises to the cytosol. The enzyme catalyses S-ubiquitinyl-[E2 ubiquitin-conjugating enzyme]-L-cysteine + [acceptor protein]-L-lysine = [E2 ubiquitin-conjugating enzyme]-L-cysteine + N(6)-ubiquitinyl-[acceptor protein]-L-lysine.. Its function is as follows. Core component of the CTLH E3 ubiquitin-protein ligase complex that selectively accepts ubiquitin from UBE2H and mediates ubiquitination and subsequent proteasomal degradation of the transcription factor HBP1. MAEA and RMND5A are both required for catalytic activity of the CTLH E3 ubiquitin-protein ligase complex. Catalytic activity of the complex is required for normal cell proliferation. The CTLH E3 ubiquitin-protein ligase complex is not required for the degradation of enzymes involved in gluconeogenesis, such as FBP1. The polypeptide is E3 ubiquitin-protein transferase RMND5B (RMND5B) (Homo sapiens (Human)).